The following is a 290-amino-acid chain: Undecaprenyl-diphosphatase (290 aa).

A run of 8 helical transmembrane segments spans residues 1–21 (MFLL…LTEF), 48–68 (SAFT…AWVF), 101–121 (IHVL…DDLI), 125–145 (LFSV…MIIA), 161–181 (INYF…WPGF), 202–222 (SDFT…LSLL), 231–251 (AHIP…LIAI), and 266–286 (FAIY…GFGI).

Belongs to the UppP family.

Its subcellular location is the cell membrane. The catalysed reaction is di-trans,octa-cis-undecaprenyl diphosphate + H2O = di-trans,octa-cis-undecaprenyl phosphate + phosphate + H(+). Catalyzes the dephosphorylation of undecaprenyl diphosphate (UPP). Confers resistance to bacitracin. The polypeptide is Undecaprenyl-diphosphatase (Staphylococcus epidermidis (strain ATCC 35984 / DSM 28319 / BCRC 17069 / CCUG 31568 / BM 3577 / RP62A)).